A 519-amino-acid chain; its full sequence is Exodeoxyribonuclease 7 large subunit (519 aa).

A disordered region spans residues 500-519; the sequence is VGRGKTRKPKEEPPAQGSLL.

The protein belongs to the XseA family. Heterooligomer composed of large and small subunits.

Its subcellular location is the cytoplasm. It catalyses the reaction Exonucleolytic cleavage in either 5'- to 3'- or 3'- to 5'-direction to yield nucleoside 5'-phosphates.. Its function is as follows. Bidirectionally degrades single-stranded DNA into large acid-insoluble oligonucleotides, which are then degraded further into small acid-soluble oligonucleotides. The polypeptide is Exodeoxyribonuclease 7 large subunit (Cereibacter sphaeroides (strain ATCC 17023 / DSM 158 / JCM 6121 / CCUG 31486 / LMG 2827 / NBRC 12203 / NCIMB 8253 / ATH 2.4.1.) (Rhodobacter sphaeroides)).